Here is a 713-residue protein sequence, read N- to C-terminus: Catalase-peroxidase (713 aa).

Positions 77 to 200 (WHSAGTYRTT…LGATVMGLIY (124 aa)) form a cross-link, tryptophyl-tyrosyl-methioninium (Trp-Tyr) (with M-226). H78 functions as the Proton acceptor in the catalytic mechanism. Positions 200-226 (YVNPEGPDGEPDLEGSAANIRESFGRM) form a cross-link, tryptophyl-tyrosyl-methioninium (Tyr-Met) (with W-77). H241 is a binding site for heme b.

Belongs to the peroxidase family. Peroxidase/catalase subfamily. As to quaternary structure, homodimer or homotetramer. Heme b is required as a cofactor. Formation of the three residue Trp-Tyr-Met cross-link is important for the catalase, but not the peroxidase activity of the enzyme.

The enzyme catalyses H2O2 + AH2 = A + 2 H2O. The catalysed reaction is 2 H2O2 = O2 + 2 H2O. In terms of biological role, bifunctional enzyme with both catalase and broad-spectrum peroxidase activity. The chain is Catalase-peroxidase from Natronomonas pharaonis (strain ATCC 35678 / DSM 2160 / CIP 103997 / JCM 8858 / NBRC 14720 / NCIMB 2260 / Gabara) (Halobacterium pharaonis).